The sequence spans 239 residues: Retrotransposon Gag-like protein 6 (239 aa).

Residues 29-69 (LTSLRLTNSALRREASTLRAEKANLTNMLESVMAELTLLRT) adopt a coiled-coil conformation. Residues 82–94 (PISSITSNGTRPM) show a composition bias toward polar residues. 2 disordered regions span residues 82-106 (PISS…EPFS) and 214-239 (TGPC…ARNL). Positions 228–239 (PAPALPARARNL) are enriched in low complexity.

This sequence belongs to the LDOC1 family.

This is Retrotransposon Gag-like protein 6 from Homo sapiens (Human).